A 292-amino-acid chain; its full sequence is NAC domain-containing protein 96 (292 aa).

One can recognise an NAC domain in the interval 6 to 158 (LPPGFRFHPT…AFVLCRVAMK (153 aa)). A DNA-binding region spans residues 106-164 (IGYRKTLVFYKGRAPLGDRSNWIMHEYRLCDDDTSQGSQNLKGAFVLCRVAMKNEIKTN). The interval 171–199 (PSEQTIGSGESSGLSSRVTSPSRDETMPF) is disordered. Residues 172–191 (SEQTIGSGESSGLSSRVTSP) show a composition bias toward polar residues.

As to quaternary structure, interacts with ABF2 and ABF4. Expressed in roots, rosettes leaves, cauline leaves and stems.

Its subcellular location is the nucleus. In terms of biological role, transcriptional activator involved in the positive regulation of abscisic acid (ABA) responsive genes. Acts as a positive factor of ABA-mediated responses. Involved in the transcriptional activation of ABA-inducible genes in response to dehydration and osmotic stresses. Plays a positive role in both stomatal closure and water loss under dehydration stress conditions. Acts synergistically with ABF2 to activate the dehydration stress-response factor RD29A transcription. Binds to the consensus core cis-acting elements 5'-CGTA-3' and 5'-CACG-3' at the RD29A promoter. Involved in hypocotyl graft union formation. Required for the auxin-mediated promotion of vascular tissue proliferation during hypocotyl graft attachment. This Arabidopsis thaliana (Mouse-ear cress) protein is NAC domain-containing protein 96.